The chain runs to 96 residues: MIPATRSLLCAALLLLATSRLATGAPIANELRCQCLQTMAGIHLKNIQSLKVLPSGPHCTQTEVIATLKNGREACLDPEAPLVQKIVQKMLKGVPK.

The N-terminal stretch at 1 to 24 (MIPATRSLLCAALLLLATSRLATG) is a signal peptide. Intrachain disulfides connect cysteine 33-cysteine 59 and cysteine 35-cysteine 75.

The protein belongs to the intercrine alpha (chemokine CxC) family. The N-terminal processed form KC(5-72) is produced by proteolytic cleavage after secretion from bone marrow stromal cells.

It localises to the secreted. Its function is as follows. Has chemotactic activity for neutrophils. Contributes to neutrophil activation during inflammation. Hematoregulatory chemokine, which, in vitro, suppresses hematopoietic progenitor cell proliferation. KC(5-72) shows a highly enhanced hematopoietic activity. The chain is Growth-regulated alpha protein (Cxcl1) from Mus musculus (Mouse).